The following is a 179-amino-acid chain: Protein GrpE (179 aa).

Residues 1-45 form a disordered region; the sequence is MSEEKLTQDPTAEEEQTETADQQESADVNWEQEAAHWKAQAEEHQ. Residues 33–45 are compositionally biased toward basic and acidic residues; it reads EAAHWKAQAEEHQ.

The protein belongs to the GrpE family. Homodimer.

It is found in the cytoplasm. In terms of biological role, participates actively in the response to hyperosmotic and heat shock by preventing the aggregation of stress-denatured proteins, in association with DnaK and GrpE. It is the nucleotide exchange factor for DnaK and may function as a thermosensor. Unfolded proteins bind initially to DnaJ; upon interaction with the DnaJ-bound protein, DnaK hydrolyzes its bound ATP, resulting in the formation of a stable complex. GrpE releases ADP from DnaK; ATP binding to DnaK triggers the release of the substrate protein, thus completing the reaction cycle. Several rounds of ATP-dependent interactions between DnaJ, DnaK and GrpE are required for fully efficient folding. This Brevibacillus choshinensis protein is Protein GrpE.